We begin with the raw amino-acid sequence, 227 residues long: Cytochrome c oxidase subunit 2 (227 aa).

At 1 to 14 (MAYPFQLGLQDATS) the chain is on the mitochondrial intermembrane side. The chain crosses the membrane as a helical span at residues 15-45 (PIMEELTNFHDHTLMIVFLISTLVLYIISLM). The Mitochondrial matrix segment spans residues 46 to 59 (LTTKLTHTSTMDAQ). Residues 60–87 (EVETIWTILPAVILILIALPSLRILYMM) traverse the membrane as a helical segment. Residues 88 to 227 (DEINNPALTV…YFEDWSASMI (140 aa)) are Mitochondrial intermembrane-facing. Cu cation contacts are provided by H161, C196, E198, C200, H204, and M207. E198 is a Mg(2+) binding site. Y218 carries the post-translational modification Phosphotyrosine.

The protein belongs to the cytochrome c oxidase subunit 2 family. As to quaternary structure, component of the cytochrome c oxidase (complex IV, CIV), a multisubunit enzyme composed of 14 subunits. The complex is composed of a catalytic core of 3 subunits MT-CO1, MT-CO2 and MT-CO3, encoded in the mitochondrial DNA, and 11 supernumerary subunits COX4I, COX5A, COX5B, COX6A, COX6B, COX6C, COX7A, COX7B, COX7C, COX8 and NDUFA4, which are encoded in the nuclear genome. The complex exists as a monomer or a dimer and forms supercomplexes (SCs) in the inner mitochondrial membrane with NADH-ubiquinone oxidoreductase (complex I, CI) and ubiquinol-cytochrome c oxidoreductase (cytochrome b-c1 complex, complex III, CIII), resulting in different assemblies (supercomplex SCI(1)III(2)IV(1) and megacomplex MCI(2)III(2)IV(2)). Found in a complex with TMEM177, COA6, COX18, COX20, SCO1 and SCO2. Interacts with TMEM177 in a COX20-dependent manner. Interacts with COX20. Interacts with COX16. The cofactor is Cu cation.

It localises to the mitochondrion inner membrane. It catalyses the reaction 4 Fe(II)-[cytochrome c] + O2 + 8 H(+)(in) = 4 Fe(III)-[cytochrome c] + 2 H2O + 4 H(+)(out). Functionally, component of the cytochrome c oxidase, the last enzyme in the mitochondrial electron transport chain which drives oxidative phosphorylation. The respiratory chain contains 3 multisubunit complexes succinate dehydrogenase (complex II, CII), ubiquinol-cytochrome c oxidoreductase (cytochrome b-c1 complex, complex III, CIII) and cytochrome c oxidase (complex IV, CIV), that cooperate to transfer electrons derived from NADH and succinate to molecular oxygen, creating an electrochemical gradient over the inner membrane that drives transmembrane transport and the ATP synthase. Cytochrome c oxidase is the component of the respiratory chain that catalyzes the reduction of oxygen to water. Electrons originating from reduced cytochrome c in the intermembrane space (IMS) are transferred via the dinuclear copper A center (CU(A)) of subunit 2 and heme A of subunit 1 to the active site in subunit 1, a binuclear center (BNC) formed by heme A3 and copper B (CU(B)). The BNC reduces molecular oxygen to 2 water molecules using 4 electrons from cytochrome c in the IMS and 4 protons from the mitochondrial matrix. The protein is Cytochrome c oxidase subunit 2 (MT-CO2) of Hybomys univittatus (Peter's striped mouse).